Consider the following 132-residue polypeptide: Small ribosomal subunit protein uS8 (132 aa).

This sequence belongs to the universal ribosomal protein uS8 family. As to quaternary structure, part of the 30S ribosomal subunit. Contacts proteins S5 and S12.

In terms of biological role, one of the primary rRNA binding proteins, it binds directly to 16S rRNA central domain where it helps coordinate assembly of the platform of the 30S subunit. The protein is Small ribosomal subunit protein uS8 of Staphylococcus epidermidis (strain ATCC 35984 / DSM 28319 / BCRC 17069 / CCUG 31568 / BM 3577 / RP62A).